A 334-amino-acid chain; its full sequence is Formamidase (334 aa).

In terms of domain architecture, CN hydrolase spans 14–260; sequence FLVAAIQFPV…WEIVTGEIYP (247 aa). Glu-60 (proton acceptor) is an active-site residue. Catalysis depends on Lys-133, which acts as the Proton donor. Cys-166 (nucleophile) is an active-site residue.

This sequence belongs to the carbon-nitrogen hydrolase superfamily. Aliphatic amidase family.

It carries out the reaction formamide + H2O = formate + NH4(+). In terms of biological role, is an aliphatic amidase with a restricted substrate specificity, as it only hydrolyzes formamide. This chain is Formamidase, found in Helicobacter pylori (strain J99 / ATCC 700824) (Campylobacter pylori J99).